A 390-amino-acid polypeptide reads, in one-letter code: Probable NADH-dependent butanol dehydrogenase 2 (390 aa).

It belongs to the iron-containing alcohol dehydrogenase family.

The protein operates within alcohol metabolism; butanol biosynthesis. The sequence is that of Probable NADH-dependent butanol dehydrogenase 2 (yugK) from Bacillus subtilis (strain 168).